The chain runs to 956 residues: UvrABC system protein A (956 aa).

ATP is bound at residue 33-40 (GLSGSGKS). The C4-type zinc-finger motif lies at 252–279 (CPYCGFSVGELEPRMFSFNSPFGACPTC). ABC transporter domains are found at residues 309–587 (WRPI…KNSI) and 607–936 (GNGL…KYLK). 639-646 (GVSGSGKS) contacts ATP. The segment at 738 to 764 (CEACKGDGIIKIEMHFLPDVYVPCEVC) adopts a C4-type zinc-finger fold.

Belongs to the ABC transporter superfamily. UvrA family. Forms a heterotetramer with UvrB during the search for lesions.

Its subcellular location is the cytoplasm. In terms of biological role, the UvrABC repair system catalyzes the recognition and processing of DNA lesions. UvrA is an ATPase and a DNA-binding protein. A damage recognition complex composed of 2 UvrA and 2 UvrB subunits scans DNA for abnormalities. When the presence of a lesion has been verified by UvrB, the UvrA molecules dissociate. The chain is UvrABC system protein A from Listeria monocytogenes serotype 4b (strain F2365).